Here is a 503-residue protein sequence, read N- to C-terminus: Aromatase (503 aa).

Residues 21–41 (VTVSAMPLLLIMGLLLLIWNC) traverse the membrane as a helical segment. Substrate is bound by residues D309 and M374. Heme is bound at residue C437.

The protein belongs to the cytochrome P450 family. The cofactor is heme.

The protein localises to the endoplasmic reticulum membrane. It is found in the microsome membrane. It catalyses the reaction testosterone + 3 reduced [NADPH--hemoprotein reductase] + 3 O2 = 17beta-estradiol + formate + 3 oxidized [NADPH--hemoprotein reductase] + 4 H2O + 4 H(+). The catalysed reaction is androst-4-ene-3,17-dione + 3 reduced [NADPH--hemoprotein reductase] + 3 O2 = estrone + formate + 3 oxidized [NADPH--hemoprotein reductase] + 4 H2O + 4 H(+). It carries out the reaction androst-4-ene-3,17-dione + reduced [NADPH--hemoprotein reductase] + O2 = 19-hydroxyandrost-4-ene-3,17-dione + oxidized [NADPH--hemoprotein reductase] + H2O + H(+). The enzyme catalyses 19-hydroxyandrost-4-ene-3,17-dione + reduced [NADPH--hemoprotein reductase] + O2 = 19-oxo-androst-4-ene-3,17-dione + oxidized [NADPH--hemoprotein reductase] + 2 H2O + H(+). It catalyses the reaction 19-oxo-androst-4-ene-3,17-dione + reduced [NADPH--hemoprotein reductase] + O2 = estrone + formate + oxidized [NADPH--hemoprotein reductase] + H2O + 2 H(+). The catalysed reaction is estrone + reduced [NADPH--hemoprotein reductase] + O2 = 2-hydroxyestrone + oxidized [NADPH--hemoprotein reductase] + H2O + H(+). It carries out the reaction 17beta-hydroxy-5alpha-androstan-3-one + reduced [NADPH--hemoprotein reductase] + O2 = 17beta,19-dihydroxy-3-oxo-5alpha-androstanone + oxidized [NADPH--hemoprotein reductase] + H2O + H(+). The enzyme catalyses 17beta,19-dihydroxy-3-oxo-5alpha-androstanone + reduced [NADPH--hemoprotein reductase] + O2 = 17beta-hydroxy-3,19-dioxo-5alpha-androstanone + oxidized [NADPH--hemoprotein reductase] + 2 H2O + H(+). It catalyses the reaction 17beta-hydroxy-3,19-dioxo-5alpha-androstanone + reduced [NADPH--hemoprotein reductase] + O2 = 17beta-hydroxy-3-oxo-19-nor-5alpha-androst-1-ene + formate + oxidized [NADPH--hemoprotein reductase] + H2O + 2 H(+). The protein operates within steroid hormone biosynthesis. In terms of biological role, a cytochrome P450 monooxygenase that catalyzes the conversion of C19 androgens, androst-4-ene-3,17-dione (androstenedione) and testosterone to the C18 estrogens, estrone and estradiol, respectively. Catalyzes three successive oxidations of C19 androgens: two conventional oxidations at C19 yielding 19-hydroxy and 19-oxo/19-aldehyde derivatives, followed by a third oxidative aromatization step that involves C1-beta hydrogen abstraction combined with cleavage of the C10-C19 bond to yield a phenolic A ring and formic acid. Alternatively, the third oxidative reaction yields a 19-norsteroid and formic acid. Converts dihydrotestosterone to delta1,10-dehydro 19-nordihydrotestosterone and may play a role in homeostasis of this potent androgen. Also displays 2-hydroxylase activity toward estrone. Mechanistically, uses molecular oxygen inserting one oxygen atom into a substrate, and reducing the second into a water molecule, with two electrons provided by NADPH via cytochrome P450 reductase (CPR; NADPH-ferrihemoprotein reductase). The protein is Aromatase (Cyp19a1) of Mus musculus (Mouse).